Consider the following 220-residue polypeptide: Superoxide dismutase [Cu-Zn], chloroplastic (220 aa).

A chloroplast-targeting transit peptide spans 1–66 (MAAHCILFSS…AAPKPLTVFA (66 aa)). Residues His112, His114, and His129 each contribute to the Cu cation site. Cysteines 123 and 212 form a disulfide. The Zn(2+) site is built by His129, His137, His146, and Asp149. His186 lines the Cu cation pocket.

This sequence belongs to the Cu-Zn superoxide dismutase family. As to quaternary structure, homotetramer. Cu cation serves as cofactor. Requires Zn(2+) as cofactor.

The protein localises to the plastid. The protein resides in the chloroplast. It catalyses the reaction 2 superoxide + 2 H(+) = H2O2 + O2. Functionally, destroys radicals which are normally produced within the cells and which are toxic to biological systems. The polypeptide is Superoxide dismutase [Cu-Zn], chloroplastic (SODCP) (Solidago canadensis var. scabra (Tall goldenrod)).